The following is a 340-amino-acid chain: Protein B17 (340 aa).

It belongs to the orthopoxvirus B17 protein family.

This Vaccinia virus (strain Western Reserve) (VACV) protein is Protein B17.